Reading from the N-terminus, the 95-residue chain is Co-chaperonin GroES (95 aa).

It belongs to the GroES chaperonin family. As to quaternary structure, heptamer of 7 subunits arranged in a ring. Interacts with the chaperonin GroEL.

Its subcellular location is the cytoplasm. Functionally, together with the chaperonin GroEL, plays an essential role in assisting protein folding. The GroEL-GroES system forms a nano-cage that allows encapsulation of the non-native substrate proteins and provides a physical environment optimized to promote and accelerate protein folding. GroES binds to the apical surface of the GroEL ring, thereby capping the opening of the GroEL channel. In Rickettsia akari (strain Hartford), this protein is Co-chaperonin GroES.